A 198-amino-acid polypeptide reads, in one-letter code: MHYPEPISKLIDSFMKLPGIGPKTAVRLAFFVLDMKEDDVLGFAKALVNAKRDLAYCSVCGHITDRDPCYICNDSHRDQSVVCVVQEPKDVIAMEKMKEYQGVYHVLRGAISPMEGIGPEDINIPQLLKRLHDETVQEVILATNPNIEGEATAMYISRLLKPTGIKVTRIAHGLPVGGDLEYADEVTLSKALEGRREV.

A C4-type zinc finger spans residues 57-72; it reads CSVCGHITDRDPCYIC. A Toprim domain is found at 80 to 175; it reads SVVCVVQEPK…KVTRIAHGLP (96 aa).

The protein belongs to the RecR family.

Functionally, may play a role in DNA repair. It seems to be involved in an RecBC-independent recombinational process of DNA repair. It may act with RecF and RecO. This is Recombination protein RecR from Bacillus thuringiensis (strain Al Hakam).